The primary structure comprises 715 residues: Polyribonucleotide nucleotidyltransferase (715 aa).

2 residues coordinate Mg(2+): D493 and D499. Residues 560–619 (PRMITIKINPEKIRDVIGKGGSVIRALTEETGTTIDISDDGVVTIASTNSDGMAEAKKRI) enclose the KH domain. The 69-residue stretch at 629–697 (GQVYEGTVLK…EKGRVRLSAK (69 aa)) folds into the S1 motif domain.

This sequence belongs to the polyribonucleotide nucleotidyltransferase family. Mg(2+) is required as a cofactor.

It is found in the cytoplasm. The enzyme catalyses RNA(n+1) + phosphate = RNA(n) + a ribonucleoside 5'-diphosphate. Functionally, involved in mRNA degradation. Catalyzes the phosphorolysis of single-stranded polyribonucleotides processively in the 3'- to 5'-direction. In Burkholderia lata (strain ATCC 17760 / DSM 23089 / LMG 22485 / NCIMB 9086 / R18194 / 383), this protein is Polyribonucleotide nucleotidyltransferase.